The sequence spans 699 residues: tRNA 5-methylaminomethyl-2-thiouridine biosynthesis bifunctional protein MnmC (699 aa).

Positions Met-1–Ala-247 are tRNA (mnm(5)s(2)U34)-methyltransferase. The segment at Ile-275–Pro-699 is FAD-dependent cmnm(5)s(2)U34 oxidoreductase. Positions Arg-675 to Pro-699 are disordered.

The protein in the N-terminal section; belongs to the methyltransferase superfamily. tRNA (mnm(5)s(2)U34)-methyltransferase family. In the C-terminal section; belongs to the DAO family. FAD is required as a cofactor.

It localises to the cytoplasm. The catalysed reaction is 5-aminomethyl-2-thiouridine(34) in tRNA + S-adenosyl-L-methionine = 5-methylaminomethyl-2-thiouridine(34) in tRNA + S-adenosyl-L-homocysteine + H(+). Its function is as follows. Catalyzes the last two steps in the biosynthesis of 5-methylaminomethyl-2-thiouridine (mnm(5)s(2)U) at the wobble position (U34) in tRNA. Catalyzes the FAD-dependent demodification of cmnm(5)s(2)U34 to nm(5)s(2)U34, followed by the transfer of a methyl group from S-adenosyl-L-methionine to nm(5)s(2)U34, to form mnm(5)s(2)U34. The chain is tRNA 5-methylaminomethyl-2-thiouridine biosynthesis bifunctional protein MnmC from Chromohalobacter salexigens (strain ATCC BAA-138 / DSM 3043 / CIP 106854 / NCIMB 13768 / 1H11).